The chain runs to 417 residues: Actin-related protein 10 (417 aa).

The protein belongs to the actin family. Subunit of dynactin, a multiprotein complex part of a tripartite complex with dynein and a adapter, such as BICDL1, BICD2 or HOOK3. The dynactin complex is built around ACTR1A/ACTB filament and consists of an actin-related filament composed of a shoulder domain, a pointed end and a barbed end. Its length is defined by its flexible shoulder domain. The soulder is composed of 2 DCTN1 subunits, 4 DCTN2 and 2 DCTN3. The 4 DCNT2 (via N-terminus) bind the ACTR1A filament and act as molecular rulers to determine the length. The pointed end is important for binding dynein-dynactin cargo adapters. Consists of 4 subunits: ACTR10, DCNT4, DCTN5 and DCTN6. The barbed end is composed of a CAPZA1:CAPZB heterodimers, which binds ACTR1A/ACTB filament and dynactin and stabilizes dynactin.

Its subcellular location is the cytoplasm. The protein localises to the cytoskeleton. Part of the dynactin complex that activates the molecular motor dynein for ultra-processive transport along microtubules. The sequence is that of Actin-related protein 10 (ACTR10) from Homo sapiens (Human).